A 362-amino-acid polypeptide reads, in one-letter code: 4-hydroxythreonine-4-phosphate dehydrogenase (362 aa).

T149 is a substrate binding site. 3 residues coordinate a divalent metal cation: H184, H229, and H295. Substrate is bound by residues K303, N312, and R321.

Belongs to the PdxA family. As to quaternary structure, homodimer. A divalent metal cation serves as cofactor.

It is found in the cytoplasm. The enzyme catalyses 4-(phosphooxy)-L-threonine + NAD(+) = 3-amino-2-oxopropyl phosphate + CO2 + NADH. Its pathway is cofactor biosynthesis; pyridoxine 5'-phosphate biosynthesis; pyridoxine 5'-phosphate from D-erythrose 4-phosphate: step 4/5. Catalyzes the NAD(P)-dependent oxidation of 4-(phosphooxy)-L-threonine (HTP) into 2-amino-3-oxo-4-(phosphooxy)butyric acid which spontaneously decarboxylates to form 3-amino-2-oxopropyl phosphate (AHAP). The sequence is that of 4-hydroxythreonine-4-phosphate dehydrogenase from Nostoc sp. (strain PCC 7120 / SAG 25.82 / UTEX 2576).